The sequence spans 188 residues: Probable nicotinate-nucleotide adenylyltransferase (188 aa).

Belongs to the NadD family.

It carries out the reaction nicotinate beta-D-ribonucleotide + ATP + H(+) = deamido-NAD(+) + diphosphate. It functions in the pathway cofactor biosynthesis; NAD(+) biosynthesis; deamido-NAD(+) from nicotinate D-ribonucleotide: step 1/1. Catalyzes the reversible adenylation of nicotinate mononucleotide (NaMN) to nicotinic acid adenine dinucleotide (NaAD). The protein is Probable nicotinate-nucleotide adenylyltransferase of Listeria monocytogenes serovar 1/2a (strain ATCC BAA-679 / EGD-e).